A 3187-amino-acid polypeptide reads, in one-letter code: Cilia- and flagella-associated protein 47 (3187 aa).

The region spanning 1746-1869 (SDSERILLSW…LCVYMYERLP (124 aa)) is the Calponin-homology (CH) domain. The disordered stretch occupies residues 2024–2052 (KLTESRQYPKHDDDMSSSGSDTDQGCSDS). Residues 2026–2037 (TESRQYPKHDDD) show a composition bias toward basic and acidic residues.

In terms of assembly, interacts with CFAP65. Highly expressed in spermatzoa (at protein level).

The protein localises to the cytoplasm. Its subcellular location is the cytoskeleton. It localises to the flagellum basal body. Functionally, plays a role in flagellar formation and sperm motility. The sequence is that of Cilia- and flagella-associated protein 47 from Homo sapiens (Human).